We begin with the raw amino-acid sequence, 557 residues long: CTP synthase (557 aa).

The amidoligase domain stretch occupies residues 1 to 270; the sequence is MTKYVFVTGG…DAIICEELKL (270 aa). Residue Ser13 coordinates CTP. A UTP-binding site is contributed by Ser13. ATP is bound by residues 14-19 and Asp71; that span reads SLGKGI. Residues Asp71 and Glu144 each coordinate Mg(2+). Residues 151 to 153, 191 to 196, and Lys227 contribute to the CTP site; these read DIE and KTKPTQ. UTP is bound by residues 191–196 and Lys227; that span reads KTKPTQ. The 253-residue stretch at 295-547 folds into the Glutamine amidotransferase type-1 domain; sequence TIGMVGKYVD…VEAALAHQQS (253 aa). L-glutamine is bound at residue Gly356. Catalysis depends on Cys383, which acts as the Nucleophile; for glutamine hydrolysis. L-glutamine-binding positions include 384–387, Glu407, and Arg473; that span reads LGMQ. Catalysis depends on residues His520 and Glu522.

This sequence belongs to the CTP synthase family. In terms of assembly, homotetramer.

The catalysed reaction is UTP + L-glutamine + ATP + H2O = CTP + L-glutamate + ADP + phosphate + 2 H(+). The enzyme catalyses L-glutamine + H2O = L-glutamate + NH4(+). It carries out the reaction UTP + NH4(+) + ATP = CTP + ADP + phosphate + 2 H(+). Its pathway is pyrimidine metabolism; CTP biosynthesis via de novo pathway; CTP from UDP: step 2/2. Its activity is regulated as follows. Allosterically activated by GTP, when glutamine is the substrate; GTP has no effect on the reaction when ammonia is the substrate. The allosteric effector GTP functions by stabilizing the protein conformation that binds the tetrahedral intermediate(s) formed during glutamine hydrolysis. Inhibited by the product CTP, via allosteric rather than competitive inhibition. Functionally, catalyzes the ATP-dependent amination of UTP to CTP with either L-glutamine or ammonia as the source of nitrogen. Regulates intracellular CTP levels through interactions with the four ribonucleotide triphosphates. The protein is CTP synthase of Paraburkholderia xenovorans (strain LB400).